Reading from the N-terminus, the 373-residue chain is Spore coat polysaccharide biosynthesis protein SpsE (373 aa).

An AFP-like domain is found at 305–367 (GIFTTAPIQK…GIVWDDILLK (63 aa)).

It functions in the pathway spore coat biogenesis; spore coat polysaccharide biosynthesis. The sequence is that of Spore coat polysaccharide biosynthesis protein SpsE (spsE) from Bacillus subtilis (strain 168).